The following is a 186-amino-acid chain: Translation initiation factor IF-3 (186 aa).

This sequence belongs to the IF-3 family. As to quaternary structure, monomer.

Its subcellular location is the cytoplasm. In terms of biological role, IF-3 binds to the 30S ribosomal subunit and shifts the equilibrium between 70S ribosomes and their 50S and 30S subunits in favor of the free subunits, thus enhancing the availability of 30S subunits on which protein synthesis initiation begins. This is Translation initiation factor IF-3 from Chlamydia caviae (strain ATCC VR-813 / DSM 19441 / 03DC25 / GPIC) (Chlamydophila caviae).